The chain runs to 449 residues: Glutamate--tRNA ligase 2 (449 aa).

The 'HIGH' region motif lies at 17-27 (PSPTGFLHVGN). A 'KMSKS' region motif is present at residues 248-252 (ALSKR). Lysine 251 contacts ATP.

This sequence belongs to the class-I aminoacyl-tRNA synthetase family. Glutamate--tRNA ligase type 1 subfamily. In terms of assembly, monomer.

The protein resides in the cytoplasm. It carries out the reaction tRNA(Glu) + L-glutamate + ATP = L-glutamyl-tRNA(Glu) + AMP + diphosphate. Functionally, catalyzes the attachment of glutamate to tRNA(Glu) in a two-step reaction: glutamate is first activated by ATP to form Glu-AMP and then transferred to the acceptor end of tRNA(Glu). This Jannaschia sp. (strain CCS1) protein is Glutamate--tRNA ligase 2.